A 361-amino-acid chain; its full sequence is Phospho-N-acetylmuramoyl-pentapeptide-transferase (361 aa).

10 helical membrane-spanning segments follow: residues 25 to 45, 73 to 93, 97 to 117, 132 to 152, 167 to 187, 200 to 220, 240 to 260, 264 to 284, 289 to 309, and 338 to 358; these read RAVM…PWVI, TMGG…WADL, YVWL…YDDW, FKMA…IATA, TVAY…VIVG, GLAA…AYVA, VVVF…FNAY, VFMG…VAVI, IVLF…MIQV, and QVVV…LSTL.

It belongs to the glycosyltransferase 4 family. MraY subfamily. Requires Mg(2+) as cofactor.

The protein resides in the cell inner membrane. It carries out the reaction UDP-N-acetyl-alpha-D-muramoyl-L-alanyl-gamma-D-glutamyl-meso-2,6-diaminopimeloyl-D-alanyl-D-alanine + di-trans,octa-cis-undecaprenyl phosphate = di-trans,octa-cis-undecaprenyl diphospho-N-acetyl-alpha-D-muramoyl-L-alanyl-D-glutamyl-meso-2,6-diaminopimeloyl-D-alanyl-D-alanine + UMP. It functions in the pathway cell wall biogenesis; peptidoglycan biosynthesis. Catalyzes the initial step of the lipid cycle reactions in the biosynthesis of the cell wall peptidoglycan: transfers peptidoglycan precursor phospho-MurNAc-pentapeptide from UDP-MurNAc-pentapeptide onto the lipid carrier undecaprenyl phosphate, yielding undecaprenyl-pyrophosphoryl-MurNAc-pentapeptide, known as lipid I. The polypeptide is Phospho-N-acetylmuramoyl-pentapeptide-transferase (Chromobacterium violaceum (strain ATCC 12472 / DSM 30191 / JCM 1249 / CCUG 213 / NBRC 12614 / NCIMB 9131 / NCTC 9757 / MK)).